The following is an 872-amino-acid chain: Cellulose synthase catalytic subunit [UDP-forming] (872 aa).

4 consecutive transmembrane segments (helical) span residues Ser-30–Leu-50, Ile-151–Phe-171, Pro-173–Met-193, and Leu-230–Gly-250. The catalytic subdomain A stretch occupies residues Leu-271–Val-364. The active site involves Asp-313. 2 residues coordinate substrate: Asp-360 and Asp-362. Residues Lys-441–Met-501 form a catalytic subdomain B region. Asp-457 is a catalytic residue. The next 5 membrane-spanning stretches (helical) occupy residues Val-525 to Leu-545, Phe-547 to Leu-567, Ile-592 to Pro-612, Ile-640 to Gly-660, and Val-668 to Val-688. The 97-residue stretch at Gln-694–Phe-790 folds into the PilZ domain. Residues Ser-833–Pro-853 form a helical membrane-spanning segment.

It belongs to the glycosyltransferase 2 family. The cofactor is Mg(2+).

It localises to the cell inner membrane. The catalysed reaction is [(1-&gt;4)-beta-D-glucosyl](n) + UDP-alpha-D-glucose = [(1-&gt;4)-beta-D-glucosyl](n+1) + UDP + H(+). It participates in glycan metabolism; bacterial cellulose biosynthesis. Its activity is regulated as follows. Activated by bis-(3'-5') cyclic diguanylic acid (c-di-GMP). In terms of biological role, catalytic subunit of cellulose synthase. It polymerizes uridine 5'-diphosphate glucose to cellulose, which is produced as an extracellular component for mechanical and chemical protection at the onset of the stationary phase, when the cells exhibit multicellular behavior (rdar morphotype). Coexpression of cellulose and thin aggregative fimbriae (curli fimbrae or fibers) leads to a hydrophobic network with tightly packed cells embedded in a highly inert matrix that confers cohesion, elasticity and tissue-like properties to colonies. The protein is Cellulose synthase catalytic subunit [UDP-forming] (bcsA) of Escherichia coli (strain K12).